Reading from the N-terminus, the 356-residue chain is Glutamine synthetase cytosolic isozyme 1-4 (356 aa).

The residue at position 2 (serine 2) is an N-acetylserine. Phosphoserine is present on residues serine 2 and serine 48. One can recognise a GS beta-grasp domain in the interval 19–99 (IIAEYIWIGG…VMCDAYTPAG (81 aa)). The segment at 37–66 (ARTLPGPVTDPSQLPKWNYDGSSTGQAPGD) is disordered. The GS catalytic domain maps to 106 to 356 (KRHAAAKIFE…IAESTILWKP (251 aa)).

Belongs to the glutamine synthetase family. Homooctamer. Interacts with GRF3. In terms of tissue distribution, expressed in the pericycle in the region of lateral root emergence.

It is found in the cytoplasm. It carries out the reaction L-glutamate + NH4(+) + ATP = L-glutamine + ADP + phosphate + H(+). Functionally, high-affinity glutamine synthetase. May contribute to the homeostatic control of glutamine synthesis in roots. The polypeptide is Glutamine synthetase cytosolic isozyme 1-4 (Arabidopsis thaliana (Mouse-ear cress)).